Consider the following 300-residue polypeptide: 4-hydroxybenzoate octaprenyltransferase (300 aa).

8 consecutive transmembrane segments (helical) span residues 32 to 52 (IGTY…SEGA), 55 to 75 (LKNL…GCVI), 108 to 128 (LFGI…ALTI), 149 to 169 (YLPQ…AFAA), 178 to 198 (AWLL…MYAM), 222 to 242 (AAVA…GAQH), 246 to 266 (VYYQ…QHLI), and 278 to 298 (FLNN…EFLF).

Belongs to the UbiA prenyltransferase family. Mg(2+) is required as a cofactor.

The protein resides in the cell inner membrane. The catalysed reaction is all-trans-octaprenyl diphosphate + 4-hydroxybenzoate = 4-hydroxy-3-(all-trans-octaprenyl)benzoate + diphosphate. Its pathway is cofactor biosynthesis; ubiquinone biosynthesis. In terms of biological role, catalyzes the prenylation of para-hydroxybenzoate (PHB) with an all-trans polyprenyl group. Mediates the second step in the final reaction sequence of ubiquinone-8 (UQ-8) biosynthesis, which is the condensation of the polyisoprenoid side chain with PHB, generating the first membrane-bound Q intermediate 3-octaprenyl-4-hydroxybenzoate. The polypeptide is 4-hydroxybenzoate octaprenyltransferase (Hahella chejuensis (strain KCTC 2396)).